Consider the following 315-residue polypeptide: Transaldolase (315 aa).

K125 functions as the Schiff-base intermediate with substrate in the catalytic mechanism.

This sequence belongs to the transaldolase family. Type 1 subfamily. In terms of assembly, homodimer.

It is found in the cytoplasm. It catalyses the reaction D-sedoheptulose 7-phosphate + D-glyceraldehyde 3-phosphate = D-erythrose 4-phosphate + beta-D-fructose 6-phosphate. It participates in carbohydrate degradation; pentose phosphate pathway; D-glyceraldehyde 3-phosphate and beta-D-fructose 6-phosphate from D-ribose 5-phosphate and D-xylulose 5-phosphate (non-oxidative stage): step 2/3. Functionally, transaldolase is important for the balance of metabolites in the pentose-phosphate pathway. The polypeptide is Transaldolase (Leptothrix cholodnii (strain ATCC 51168 / LMG 8142 / SP-6) (Leptothrix discophora (strain SP-6))).